An 865-amino-acid chain; its full sequence is Protein translocase subunit SecA (865 aa).

ATP contacts are provided by residues Gln-93, 111–115 (GEGKT), and Asp-501. Zn(2+) is bound by residues Cys-841, Cys-843, Cys-852, and Cys-853.

It belongs to the SecA family. As to quaternary structure, monomer and homodimer. Part of the essential Sec protein translocation apparatus which comprises SecA, SecYEG and auxiliary proteins SecDF-YajC and YidC. Requires Zn(2+) as cofactor.

It localises to the cell inner membrane. The protein localises to the cytoplasm. The enzyme catalyses ATP + H2O + cellular proteinSide 1 = ADP + phosphate + cellular proteinSide 2.. Functionally, part of the Sec protein translocase complex. Interacts with the SecYEG preprotein conducting channel. Has a central role in coupling the hydrolysis of ATP to the transfer of proteins into and across the cell membrane, serving as an ATP-driven molecular motor driving the stepwise translocation of polypeptide chains across the membrane. In Helicobacter pylori (strain Shi470), this protein is Protein translocase subunit SecA.